The chain runs to 497 residues: Alkene monooxygenase system, oxygenase component subunit alpha (497 aa).

The Fe cation site is built by glutamate 104, glutamate 134, histidine 137, glutamate 197, glutamate 231, and histidine 234.

Belongs to the TmoA/XamoA family. The alkene monooxygenase multicomponent enzyme system is composed of an electron transfer component and a monooxygenase component interacting with the effector protein XamoD. The electron transfer component is composed of a ferredoxin reductase (XamoF) and a ferredoxin (XamoC), and the monooxygenase component is formed by a heterohexamer (dimer of heterotrimers) of two alpha subunits (XamoA), two beta subunits (XamoE) and two gamma subunits (XamoB). Fe(2+) is required as a cofactor.

Its subcellular location is the cytoplasm. It carries out the reaction propene + NADH + O2 + H(+) = 1,2-epoxypropane + NAD(+) + H2O. With respect to regulation, inhibited by propyne. Component of the alkene monooxygenase multicomponent enzyme system which catalyzes the O2- and NADH-dependent epoxidation of short chain (C2 to C6) alkenes to their corresponding epoxides. Also able to catalyze the oxidation of a number of chlorinated alkenes, including trichloroethylene, cis- and trans-1,2-dichloroethylene, vinyl chloride, 1-chloropropylene, 1,3-dichloropropylene and 2,3-dichloropropylene. The protein is Alkene monooxygenase system, oxygenase component subunit alpha of Xanthobacter autotrophicus (strain ATCC BAA-1158 / Py2).